The primary structure comprises 514 residues: 2,3-bisphosphoglycerate-independent phosphoglycerate mutase (514 aa).

Mn(2+) contacts are provided by Asp-14 and Ser-64. The active-site Phosphoserine intermediate is the Ser-64. Residues His-125, 155-156 (RD), Arg-187, Arg-193, 263-266 (RADR), and Lys-336 contribute to the substrate site. Mn(2+)-binding residues include Asp-403, His-407, Asp-444, His-445, and His-463.

This sequence belongs to the BPG-independent phosphoglycerate mutase family. As to quaternary structure, monomer. Mn(2+) serves as cofactor.

The enzyme catalyses (2R)-2-phosphoglycerate = (2R)-3-phosphoglycerate. It functions in the pathway carbohydrate degradation; glycolysis; pyruvate from D-glyceraldehyde 3-phosphate: step 3/5. Functionally, catalyzes the interconversion of 2-phosphoglycerate and 3-phosphoglycerate. The chain is 2,3-bisphosphoglycerate-independent phosphoglycerate mutase from Shewanella putrefaciens (strain CN-32 / ATCC BAA-453).